The chain runs to 260 residues: MLGFAPAPGRPLFVLFGSSIVQFSFSNGGWGAALADIYARKADILLRGYIGWNSRRALQVIDKIFPKDSPVQPSLVIVYFGGNDSVAAHSSGLGPHVPLEEYIDNMRKIADHLKSLSEKTRVIFLSCPPLNEETLRKSTSTVLSEIVRTNETCRLYSEACVSLCKEMDLKVVDLWNAMQKRDDWATACFTDGLHLSEEGSKIVVEEILRILKEAEWDPCLHWKAMPTEFGEDSPYDLVSSSGQSTVNPSDWTFHRTIQWD.

Positions 1–35 are cleaved as a signal peptide; it reads MLGFAPAPGRPLFVLFGSSIVQFSFSNGGWGAALA. The active-site Nucleophile is Ser18. N-linked (GlcNAc...) asparagine glycosylation is found at Asn83 and Asn150. Residues Asp191 and His194 contribute to the active site.

The protein belongs to the 'GDSL' lipolytic enzyme family. As to expression, highly expressed in panicles. Expressed in shoots, mature flowers and seeds.

The protein localises to the endoplasmic reticulum. Involved in the organization of leaf cuticle and wax crystals. In Oryza sativa subsp. japonica (Rice), this protein is GDSL esterase/lipase WDL1.